The primary structure comprises 403 residues: S-adenosylmethionine synthase (403 aa).

Position 17 (histidine 17) interacts with ATP. Aspartate 19 contacts Mg(2+). Position 45 (glutamate 45) interacts with K(+). Residues glutamate 58 and glutamine 104 each coordinate L-methionine. The segment at glutamine 104 to threonine 114 is flexible loop. ATP-binding positions include aspartate 179 to lysine 181, lysine 250 to phenylalanine 251, aspartate 259, arginine 265 to lysine 266, alanine 282, and lysine 286. Aspartate 259 contributes to the L-methionine binding site. Residue lysine 290 coordinates L-methionine.

The protein belongs to the AdoMet synthase family. As to quaternary structure, homotetramer; dimer of dimers. The cofactor is Mg(2+). Requires K(+) as cofactor.

The protein resides in the cytoplasm. The enzyme catalyses L-methionine + ATP + H2O = S-adenosyl-L-methionine + phosphate + diphosphate. The protein operates within amino-acid biosynthesis; S-adenosyl-L-methionine biosynthesis; S-adenosyl-L-methionine from L-methionine: step 1/1. In terms of biological role, catalyzes the formation of S-adenosylmethionine (AdoMet) from methionine and ATP. The overall synthetic reaction is composed of two sequential steps, AdoMet formation and the subsequent tripolyphosphate hydrolysis which occurs prior to release of AdoMet from the enzyme. This Mycolicibacterium paratuberculosis (strain ATCC BAA-968 / K-10) (Mycobacterium paratuberculosis) protein is S-adenosylmethionine synthase.